Consider the following 473-residue polypeptide: Photosystem II CP43 reaction center protein (473 aa).

The propeptide occupies 1–14 (MKILYSPRRFYPVE). At Thr-15 the chain carries N-acetylthreonine. Position 15 is a phosphothreonine (Thr-15). Transmembrane regions (helical) follow at residues 69 to 93 (LFEV…PHLA), 134 to 155 (IIGP…KDKN), 178 to 200 (KALY…RKIT), 255 to 275 (KPFA…LSYS), and 291 to 312 (WFNN…ASQA). Glu-367 lines the [CaMn4O5] cluster pocket. The helical transmembrane segment at 447-471 (RARAAAAGFEKGIDRDFEPVLSTTP) threads the bilayer.

This sequence belongs to the PsbB/PsbC family. PsbC subfamily. PSII is composed of 1 copy each of membrane proteins PsbA, PsbB, PsbC, PsbD, PsbE, PsbF, PsbH, PsbI, PsbJ, PsbK, PsbL, PsbM, PsbT, PsbX, PsbY, PsbZ, Psb30/Ycf12, at least 3 peripheral proteins of the oxygen-evolving complex and a large number of cofactors. It forms dimeric complexes. It depends on Binds multiple chlorophylls and provides some of the ligands for the Ca-4Mn-5O cluster of the oxygen-evolving complex. It may also provide a ligand for a Cl- that is required for oxygen evolution. PSII binds additional chlorophylls, carotenoids and specific lipids. as a cofactor.

It is found in the plastid. The protein localises to the chloroplast thylakoid membrane. One of the components of the core complex of photosystem II (PSII). It binds chlorophyll and helps catalyze the primary light-induced photochemical processes of PSII. PSII is a light-driven water:plastoquinone oxidoreductase, using light energy to abstract electrons from H(2)O, generating O(2) and a proton gradient subsequently used for ATP formation. The chain is Photosystem II CP43 reaction center protein from Huperzia lucidula (Shining clubmoss).